The sequence spans 395 residues: Elongation factor Tu (395 aa).

The region spanning 10-204 (KSHVNVGTLG…AVDEYIPTPE (195 aa)) is the tr-type G domain. Residues 19 to 26 (GHVDHGKT) are G1. 19-26 (GHVDHGKT) contributes to the GTP binding site. Mg(2+) is bound at residue Thr26. The tract at residues 60–64 (GITIS) is G2. The segment at 81–84 (DCPG) is G3. Residues 81-85 (DCPGH) and 136-139 (NKTD) each bind GTP. Positions 136 to 139 (NKTD) are G4. Residues 174 to 176 (SAL) are G5.

This sequence belongs to the TRAFAC class translation factor GTPase superfamily. Classic translation factor GTPase family. EF-Tu/EF-1A subfamily. As to quaternary structure, monomer.

The protein localises to the cytoplasm. It catalyses the reaction GTP + H2O = GDP + phosphate + H(+). Its function is as follows. GTP hydrolase that promotes the GTP-dependent binding of aminoacyl-tRNA to the A-site of ribosomes during protein biosynthesis. The polypeptide is Elongation factor Tu (Oceanobacillus iheyensis (strain DSM 14371 / CIP 107618 / JCM 11309 / KCTC 3954 / HTE831)).